Here is a 304-residue protein sequence, read N- to C-terminus: Protein translocase subunit SecF (304 aa).

The next 6 helical transmembrane spans lie at 20–40 (AKLF…LIFT), 143–163 (AMMA…IRFE), 164–184 (LIFA…TLGF), 195–215 (TVVA…IVVF), 244–266 (LSRT…IFGG), and 276–298 (LVIG…VYLI).

This sequence belongs to the SecD/SecF family. SecF subfamily. As to quaternary structure, forms a complex with SecD. Part of the essential Sec protein translocation apparatus which comprises SecA, SecYEG and auxiliary proteins SecDF. Other proteins may also be involved.

Its subcellular location is the cell inner membrane. In terms of biological role, part of the Sec protein translocase complex. Interacts with the SecYEG preprotein conducting channel. SecDF uses the proton motive force (PMF) to complete protein translocation after the ATP-dependent function of SecA. The sequence is that of Protein translocase subunit SecF from Calditerrivibrio nitroreducens (strain DSM 19672 / NBRC 101217 / Yu37-1).